Reading from the N-terminus, the 451-residue chain is Serine--tRNA ligase (451 aa).

L-serine is bound at residue 258-260; sequence TSE. An ATP-binding site is contributed by 289–291; sequence RSE. L-serine is bound at residue glutamate 312. 376 to 379 is an ATP binding site; it reads EISS. Serine 411 lines the L-serine pocket.

The protein belongs to the class-II aminoacyl-tRNA synthetase family. Type-1 seryl-tRNA synthetase subfamily. As to quaternary structure, homodimer. The tRNA molecule binds across the dimer.

The protein resides in the cytoplasm. It carries out the reaction tRNA(Ser) + L-serine + ATP = L-seryl-tRNA(Ser) + AMP + diphosphate + H(+). The enzyme catalyses tRNA(Sec) + L-serine + ATP = L-seryl-tRNA(Sec) + AMP + diphosphate + H(+). It functions in the pathway aminoacyl-tRNA biosynthesis; selenocysteinyl-tRNA(Sec) biosynthesis; L-seryl-tRNA(Sec) from L-serine and tRNA(Sec): step 1/1. Functionally, catalyzes the attachment of serine to tRNA(Ser). Is also able to aminoacylate tRNA(Sec) with serine, to form the misacylated tRNA L-seryl-tRNA(Sec), which will be further converted into selenocysteinyl-tRNA(Sec). In Bordetella bronchiseptica (strain ATCC BAA-588 / NCTC 13252 / RB50) (Alcaligenes bronchisepticus), this protein is Serine--tRNA ligase.